The primary structure comprises 361 residues: Chorismate synthase (361 aa).

Residues Arg-48 and Arg-54 each contribute to the NADP(+) site. Residues 125–127, 238–239, Gly-278, 293–297, and Arg-319 contribute to the FMN site; these read RSS, NA, and KPTSS.

This sequence belongs to the chorismate synthase family. As to quaternary structure, homotetramer. FMNH2 serves as cofactor.

It catalyses the reaction 5-O-(1-carboxyvinyl)-3-phosphoshikimate = chorismate + phosphate. The protein operates within metabolic intermediate biosynthesis; chorismate biosynthesis; chorismate from D-erythrose 4-phosphate and phosphoenolpyruvate: step 7/7. Catalyzes the anti-1,4-elimination of the C-3 phosphate and the C-6 proR hydrogen from 5-enolpyruvylshikimate-3-phosphate (EPSP) to yield chorismate, which is the branch point compound that serves as the starting substrate for the three terminal pathways of aromatic amino acid biosynthesis. This reaction introduces a second double bond into the aromatic ring system. The polypeptide is Chorismate synthase (Escherichia coli O139:H28 (strain E24377A / ETEC)).